A 318-amino-acid chain; its full sequence is Receptor homology region, transmembrane domain- and RING domain-containing protein 5 (318 aa).

Positions 1 to 20 (MNYSWITIMSLLVICKLASA) are cleaved as a signal peptide. The Lumenal portion of the chain corresponds to 22–163 (VVLIGKNTIL…IPGFGISSWS (142 aa)). A disulfide bridge connects residues C62 and C87. Residues 70-143 (EKRSKYRSSY…RASGEVLKGY (74 aa)) enclose the PA domain. An N-linked (GlcNAc...) asparagine glycan is attached at N121. The helical transmembrane segment at 164 to 184 (IMGITFISLLAMSAILATCFV) threads the bilayer. Residues 185-318 (VRRHQIRQSV…DLPIVVRVYL (134 aa)) lie on the Cytoplasmic side of the membrane. The segment at 233-275 (CAICIDDYCVGEKLRILPCKHKYHAVCIDSWLGRCRSFCPVCK) adopts an RING-type; atypical zinc-finger fold.

It localises to the prevacuolar compartment membrane. It is found in the protein storage vacuole membrane. Involved in the trafficking of vacuolar proteins. May function as a sorting receptor for protein trafficking to the protein storage vacuole (PSV). The chain is Receptor homology region, transmembrane domain- and RING domain-containing protein 5 (RMR5) from Arabidopsis thaliana (Mouse-ear cress).